The primary structure comprises 517 residues: Perilipin-1 (517 aa).

The residue at position 81 (serine 81) is a Phosphoserine. Residue threonine 85 is modified to Phosphothreonine. Phosphoserine occurs at positions 126, 130, 132, 137, and 174. Residues 197-217 (VESAPSSGRQKTQKAPKAKPS) form a disordered region. Phosphothreonine occurs at positions 224, 299, and 301. Residues 285 to 321 (HNLAASKDENHEDQTDTEGEETDEEEEEEESEAEENV) form a disordered region. Residues 291-322 (KDENHEDQTDTEGEETDEEEEEEESEAEENVL) form a required for interaction with CIDEC region. The segment covering 299-319 (TDTEGEETDEEEEEEESEAEE) has biased composition (acidic residues). Phosphoserine occurs at positions 315, 385, 387, 408, 411, 434, 436, 440, 460, 492, and 494. Positions 415–495 (PESEFQDIDN…KPARRVSDSF (81 aa)) are disordered. A compositionally biased stretch (basic and acidic residues) spans 483–492 (PREKPARRVS).

Belongs to the perilipin family. Interacts with ABHD5. Interacts with CIDEC. Interacts with AQP7. In terms of processing, major cAMP-dependent protein kinase substrate in adipocytes, also dephosphorylated by PP1. When phosphorylated, may be maximally sensitive to HSL. When unphosphorylated, may play a role in the inhibition of lipolysis, by acting as a barrier in lipid droplet. Post-translationally, the N-terminus is blocked. As to expression, adipocytes.

It is found in the endoplasmic reticulum. The protein localises to the lipid droplet. Modulator of adipocyte lipid metabolism. Coats lipid storage droplets to protect them from breakdown by hormone-sensitive lipase (HSL). Its absence may result in leanness. Plays a role in unilocular lipid droplet formation by activating CIDEC. Their interaction promotes lipid droplet enlargement and directional net neutral lipid transfer. May modulate lipolysis and triglyceride levels. The polypeptide is Perilipin-1 (Plin1) (Rattus norvegicus (Rat)).